The chain runs to 122 residues: Large ribosomal subunit protein uL14 (122 aa).

It belongs to the universal ribosomal protein uL14 family. Part of the 50S ribosomal subunit. Forms a cluster with proteins L3 and L19. In the 70S ribosome, L14 and L19 interact and together make contacts with the 16S rRNA in bridges B5 and B8.

Binds to 23S rRNA. Forms part of two intersubunit bridges in the 70S ribosome. In Syntrophotalea carbinolica (strain DSM 2380 / NBRC 103641 / GraBd1) (Pelobacter carbinolicus), this protein is Large ribosomal subunit protein uL14.